The chain runs to 117 residues: Cuticle protein CP1243 (117 aa).

4 repeat units span residues 1-17 (NYGESGIVYPDGRLVQF), 26-43 (AEIGEAGVVMHDGTHVQF), 67-84 (QPYGYSGIMKPDGNNRQF), and 93-110 (VLVGPSGAVTADGKNVQF).

In terms of tissue distribution, calcified shell.

The polypeptide is Cuticle protein CP1243 (Cancer pagurus (Rock crab)).